Reading from the N-terminus, the 255-residue chain is Indole-3-glycerol phosphate synthase (255 aa).

This sequence belongs to the TrpC family.

It catalyses the reaction 1-(2-carboxyphenylamino)-1-deoxy-D-ribulose 5-phosphate + H(+) = (1S,2R)-1-C-(indol-3-yl)glycerol 3-phosphate + CO2 + H2O. The protein operates within amino-acid biosynthesis; L-tryptophan biosynthesis; L-tryptophan from chorismate: step 4/5. This is Indole-3-glycerol phosphate synthase (trpC) from Priestia megaterium (strain ATCC 12872 / QMB1551) (Bacillus megaterium).